The sequence spans 528 residues: Lanosterol 14-alpha demethylase (528 aa).

Residue cysteine 470 coordinates heme.

The protein belongs to the cytochrome P450 family. The cofactor is heme.

The protein resides in the membrane. It catalyses the reaction a 14alpha-methyl steroid + 3 reduced [NADPH--hemoprotein reductase] + 3 O2 = a Delta(14) steroid + formate + 3 oxidized [NADPH--hemoprotein reductase] + 4 H2O + 4 H(+). It carries out the reaction a 14alpha-methyl steroid + reduced [NADPH--hemoprotein reductase] + O2 = a 14alpha-hydroxymethyl steroid + oxidized [NADPH--hemoprotein reductase] + H2O + H(+). The catalysed reaction is a 14alpha-hydroxymethyl steroid + reduced [NADPH--hemoprotein reductase] + O2 = a 14alpha-formyl steroid + oxidized [NADPH--hemoprotein reductase] + 2 H2O + H(+). The enzyme catalyses a 14alpha-formyl steroid + reduced [NADPH--hemoprotein reductase] + O2 = a Delta(14) steroid + formate + oxidized [NADPH--hemoprotein reductase] + H2O + 2 H(+). It catalyses the reaction lanosterol + 3 reduced [NADPH--hemoprotein reductase] + 3 O2 = 4,4-dimethyl-5alpha-cholesta-8,14,24-trien-3beta-ol + formate + 3 oxidized [NADPH--hemoprotein reductase] + 4 H2O + 4 H(+). It carries out the reaction lanosterol + reduced [NADPH--hemoprotein reductase] + O2 = 32-hydroxylanosterol + oxidized [NADPH--hemoprotein reductase] + H2O + H(+). The catalysed reaction is 32-hydroxylanosterol + reduced [NADPH--hemoprotein reductase] + O2 = 32-oxolanosterol + oxidized [NADPH--hemoprotein reductase] + 2 H2O + H(+). The enzyme catalyses 32-oxolanosterol + reduced [NADPH--hemoprotein reductase] + O2 = 4,4-dimethyl-5alpha-cholesta-8,14,24-trien-3beta-ol + formate + oxidized [NADPH--hemoprotein reductase] + H2O + 2 H(+). It catalyses the reaction eburicol + 3 reduced [NADPH--hemoprotein reductase] + 3 O2 = 14-demethyleburicol + formate + 3 oxidized [NADPH--hemoprotein reductase] + 4 H2O + 4 H(+). It carries out the reaction eburicol + reduced [NADPH--hemoprotein reductase] + O2 = 32-hydroxyeburicol + oxidized [NADPH--hemoprotein reductase] + H2O + H(+). The catalysed reaction is 32-hydroxyeburicol + reduced [NADPH--hemoprotein reductase] + O2 = 32-oxoeburicol + oxidized [NADPH--hemoprotein reductase] + 2 H2O + H(+). The enzyme catalyses 32-oxoeburicol + reduced [NADPH--hemoprotein reductase] + O2 = 14-demethyleburicol + formate + oxidized [NADPH--hemoprotein reductase] + H2O + 2 H(+). The protein operates within steroid biosynthesis; zymosterol biosynthesis; zymosterol from lanosterol: step 1/6. Its function is as follows. Sterol 14alpha-demethylase that plays a critical role in the third module of ergosterol biosynthesis pathway, being ergosterol the major sterol component in fungal membranes that participates in a variety of functions. The third module or late pathway involves the ergosterol synthesis itself through consecutive reactions that mainly occur in the endoplasmic reticulum (ER) membrane. In filamentous fungi, during the initial step of this module, lanosterol (lanosta-8,24-dien-3beta-ol) can be metabolized to eburicol. Sterol 14alpha-demethylase catalyzes the three-step oxidative removal of the 14alpha-methyl group (C-32) of both these sterols in the form of formate, and converts eburicol and lanosterol to 14-demethyleburicol (4,4,24-trimethylergosta-8,14,24(28)-trienol) and 4,4-dimethyl-5alpha-cholesta-8,14,24-trien-3beta-ol, respectively, which are further metabolized by other enzymes in the pathway to ergosterol. Can also use substrates not intrinsic to fungi, such as 24,25-dihydrolanosterol (DHL), producing 4,4-dimethyl-8,14-cholestadien-3-beta-ol, but at lower rates than the endogenous substrates. In Candida tropicalis (Yeast), this protein is Lanosterol 14-alpha demethylase (ERG11).